The sequence spans 249 residues: Indole-3-glycerol phosphate synthase (249 aa).

Belongs to the TrpC family.

It carries out the reaction 1-(2-carboxyphenylamino)-1-deoxy-D-ribulose 5-phosphate + H(+) = (1S,2R)-1-C-(indol-3-yl)glycerol 3-phosphate + CO2 + H2O. It functions in the pathway amino-acid biosynthesis; L-tryptophan biosynthesis; L-tryptophan from chorismate: step 4/5. This chain is Indole-3-glycerol phosphate synthase, found in Pyrobaculum arsenaticum (strain DSM 13514 / JCM 11321 / PZ6).